The primary structure comprises 360 residues: DNA replication and repair protein RecF (360 aa).

Gly30–Thr37 contributes to the ATP binding site.

It belongs to the RecF family.

The protein localises to the cytoplasm. Its function is as follows. The RecF protein is involved in DNA metabolism; it is required for DNA replication and normal SOS inducibility. RecF binds preferentially to single-stranded, linear DNA. It also seems to bind ATP. This chain is DNA replication and repair protein RecF, found in Mannheimia succiniciproducens (strain KCTC 0769BP / MBEL55E).